The sequence spans 160 residues: Large ribosomal subunit protein eL21 (160 aa).

It belongs to the eukaryotic ribosomal protein eL21 family.

In Dictyostelium discoideum (Social amoeba), this protein is Large ribosomal subunit protein eL21 (rpl21).